Reading from the N-terminus, the 100-residue chain is MSRRCQITGKGVLTGNNVSHANNKSRRRFLPNLQETTLISDILGASVRMRLSTDGIRTVEHNGGLDSFLLGTPNRKLPTEAQVIKRRILRVQERKAAQTA.

This sequence belongs to the bacterial ribosomal protein bL28 family.

The protein is Large ribosomal subunit protein bL28 of Gluconobacter oxydans (strain 621H) (Gluconobacter suboxydans).